Consider the following 332-residue polypeptide: Aspartate carbamoyltransferase catalytic subunit (332 aa).

Carbamoyl phosphate contacts are provided by Arg78 and Thr79. Lys106 serves as a coordination point for L-aspartate. Carbamoyl phosphate is bound by residues Arg128, His156, and Gln159. Arg189 and Arg243 together coordinate L-aspartate. The carbamoyl phosphate site is built by Gly284 and Pro285.

Belongs to the aspartate/ornithine carbamoyltransferase superfamily. ATCase family. Heterododecamer (2C3:3R2) of six catalytic PyrB chains organized as two trimers (C3), and six regulatory PyrI chains organized as three dimers (R2).

It carries out the reaction carbamoyl phosphate + L-aspartate = N-carbamoyl-L-aspartate + phosphate + H(+). It functions in the pathway pyrimidine metabolism; UMP biosynthesis via de novo pathway; (S)-dihydroorotate from bicarbonate: step 2/3. In terms of biological role, catalyzes the condensation of carbamoyl phosphate and aspartate to form carbamoyl aspartate and inorganic phosphate, the committed step in the de novo pyrimidine nucleotide biosynthesis pathway. In Caulobacter vibrioides (strain ATCC 19089 / CIP 103742 / CB 15) (Caulobacter crescentus), this protein is Aspartate carbamoyltransferase catalytic subunit.